Reading from the N-terminus, the 22-residue chain is Myofibril-bound serine protease (22 aa).

One can recognise a Peptidase S1 domain in the interval 1–22 (IVGGYECEAYSKPYQVSINLGY).

The protein belongs to the peptidase S1 family. In terms of tissue distribution, detected in skeletal muscle (at protein level).

The protein resides in the cytoplasm. In terms of biological role, serine protease which degrades the myosin heavy chain and tropomyosin, but not actin. Selectively cleaves Arg-|-Xaa bonds. This is Myofibril-bound serine protease from Saurida undosquamis (Brushtooth lizardfish).